Consider the following 87-residue polypeptide: Small ribosomal subunit protein bS20 (87 aa).

It belongs to the bacterial ribosomal protein bS20 family.

Its function is as follows. Binds directly to 16S ribosomal RNA. This chain is Small ribosomal subunit protein bS20, found in Roseobacter denitrificans (strain ATCC 33942 / OCh 114) (Erythrobacter sp. (strain OCh 114)).